Reading from the N-terminus, the 119-residue chain is Large ribosomal subunit protein bL20 (119 aa).

It belongs to the bacterial ribosomal protein bL20 family.

Functionally, binds directly to 23S ribosomal RNA and is necessary for the in vitro assembly process of the 50S ribosomal subunit. It is not involved in the protein synthesizing functions of that subunit. The polypeptide is Large ribosomal subunit protein bL20 (Sorangium cellulosum (strain So ce56) (Polyangium cellulosum (strain So ce56))).